A 313-amino-acid chain; its full sequence is Ketimine reductase mu-crystallin (313 aa).

R47 lines the 3,3',5-triiodo-L-thyronine pocket. Residues S90, H91, R118, A143, V145, Q146, N167, R168, T169, N172, T204, M205, and V225 each coordinate NADPH. E256 is a binding site for 3,3',5-triiodo-L-thyronine. Residue S291 coordinates NADPH.

The protein belongs to the ornithine cyclodeaminase/mu-crystallin family. Homodimer. Binds the thyroid hormone triiodothyronine (T3); T3 binding inhibits enzymatic activity. In terms of tissue distribution, expressed in the spiral ligament of the cochlea (at protein level).

It localises to the cytoplasm. It catalyses the reaction L-pipecolate + NADP(+) = Delta(1)-piperideine-2-carboxylate + NADPH + H(+). The enzyme catalyses L-pipecolate + NAD(+) = Delta(1)-piperideine-2-carboxylate + NADH + H(+). The catalysed reaction is L-proline + NADP(+) = 1-pyrroline-2-carboxylate + NADPH + H(+). It carries out the reaction L-proline + NAD(+) = 1-pyrroline-2-carboxylate + NADH + H(+). It catalyses the reaction (3R)-1,4-thiomorpholine-3-carboxylate + NAD(+) = 3,4-dehydrothiomorpholine-3-carboxylate + NADH + 2 H(+). The enzyme catalyses (3R)-1,4-thiomorpholine-3-carboxylate + NADP(+) = 3,4-dehydrothiomorpholine-3-carboxylate + NADPH + 2 H(+). The catalysed reaction is (S)-cystathionine ketimine + NADH + 2 H(+) = (3R,5S)-2,3,5,6,7-pentahydro-1,4-thiazepine-3,5-dicarboxylate + NAD(+). It carries out the reaction (S)-cystathionine ketimine + NADPH + 2 H(+) = (3R,5S)-2,3,5,6,7-pentahydro-1,4-thiazepine-3,5-dicarboxylate + NADP(+). It catalyses the reaction (R)-lanthionine ketimine + NADPH + 2 H(+) = (3R,5R)-1,4-thiomorpholine-3,5-dicarboxylate + NADP(+). The enzyme catalyses Delta(2)-thiazoline-2-carboxylate + NADPH + 2 H(+) = L-thiazolidine-2-carboxylate + NADP(+). Catalyzes the NAD(P)H-dependent reduction of imine double bonds of a number of cyclic ketimine substrates, including sulfur-containing cyclic ketimines. Under physiological conditions, it efficiently catalyzes delta(1)-piperideine-2-carboxylate (P2C) and delta(1)-pyrroline-2-carboxylate (Pyr2C) reduction, suggesting a central role in lysine and glutamate metabolism. Additional substrates are delta(2)-thiazoline-2-carboxylate (T2C), 3,4-dehydrothiomorpholine-3-carboxylate (AECK), and (R)-lanthionine ketimine (LK) that is reduced at very low rate compared to other substrates. Also catalyzes the NAD(P)H-dependent reduction of (S)-cystathionine ketimine (CysK). The chain is Ketimine reductase mu-crystallin from Mus musculus (Mouse).